The primary structure comprises 657 residues: Probable potassium transport system protein Kup (657 aa).

Positions 1-25 (MGSGPADEEHTVDTEPGVSPPRRTV) are disordered. A run of 12 helical transmembrane segments spans residues 35–55 (VVVG…IYTI), 77–97 (VVSL…VLLV), 127–147 (TAVL…DSMI), 165–185 (PGLE…LFSV), 196–216 (LFGP…VSGI), 234–254 (FFFG…LAVT), 275–295 (WLVL…ALLL), 315–335 (WPMV…VITG), 365–385 (IYVP…VFAF), 394–414 (AFGM…FYIV), 422–442 (LWLV…FLAA), and 447–467 (LVHG…VMTT).

The protein belongs to the HAK/KUP transporter (TC 2.A.72) family.

The protein resides in the cell membrane. The enzyme catalyses K(+)(in) + H(+)(in) = K(+)(out) + H(+)(out). Transport of potassium into the cell. Likely operates as a K(+):H(+) symporter. This is Probable potassium transport system protein Kup from Rhodococcus jostii (strain RHA1).